We begin with the raw amino-acid sequence, 438 residues long: Indole diterpene prenyltransferase janD (438 aa).

80-81 provides a ligand contact to L-tryptophan; the sequence is FM. Residues arginine 102, lysine 190, arginine 264, lysine 266, tyrosine 268, tyrosine 350, tyrosine 414, and tyrosine 418 each contribute to the substrate site.

Belongs to the tryptophan dimethylallyltransferase family.

Its pathway is secondary metabolite biosynthesis. Its function is as follows. Indole diterpene prenyltransferase; part of the gene cluster that mediates the biosynthesis of the indole diterpenes janthitremanes such as shearinine K or shearinine A. The geranylgeranyl diphosphate (GGPP) synthase janG catalyzes the first step in janthitremane biosynthesis via conversion of farnesyl pyrophosphate and isopentyl pyrophosphate into geranylgeranyl pyrophosphate (GGPP). Condensation of indole-3-glycerol phosphate with GGPP by the prenyl transferase janC then forms 3-geranylgeranylindole (3-GGI). Epoxidation by the FAD-dependent monooxygenase janM leads to a epoxidized-GGI that is substrate of the terpene cyclase janB for cyclization to yield paspaline. Paspaline is subsequently converted to 13-desoxypaspaline by the cytochrome P450 monooxygenase janP, via beta-PC-M6 in a series of alpha-face oxidations. The cytochrome P450 monooxygenase janQ is proposed to carry out sequential beta-face oxidation steps at C-7 and C-13 of 13-desoxypaspaline to form paspalicine and paspalinine respectively. The indole diterpene prenyltransferase janD may then convert paspalinine into shearinine K which is substrate of janO and/or additional enzymes for oxidation and cyclization to generate shearinine A. The sequence is that of Indole diterpene prenyltransferase janD from Penicillium janthinellum (Penicillium vitale).